A 549-amino-acid polypeptide reads, in one-letter code: Ceramide kinase 1 (549 aa).

A DAGKc domain is found at asparagine 162–glutamine 316. Residues asparagine 172–phenylalanine 174 and threonine 205–asparagine 209 each bind ATP. A substrate-binding site is contributed by glycine 233–glycine 236. Catalysis depends on aspartate 235, which acts as the Proton donor/acceptor. ATP is bound by residues glutamate 240, glycine 277–alanine 279, arginine 342, arginine 348, and aspartate 500–glutamate 502.

The enzyme catalyses an N-acylsphing-4-enine + ATP = an N-acylsphing-4-enine 1-phosphate + ADP + H(+). It catalyses the reaction an N-acyl-15-methylhexadecasphing-4-enine + ATP = an N-acyl-15-methylhexadecasphing-4-enine-1-phosphate + ADP + H(+). It participates in lipid metabolism; sphingolipid metabolism. Functionally, catalyzes the phosphorylation of ceramide to form ceramide 1-phosphate. C.elegans contain specific sphingoid bases, which are unique or different in structure compared to the sphingoid bases found in other animals. Two examples of these distinctive compounds are: 15-methylhexadecasphinganine and 15-methylhexadecasphing-4-enine. This chain is Ceramide kinase 1, found in Caenorhabditis elegans.